A 302-amino-acid chain; its full sequence is tRNA dimethylallyltransferase 2 (302 aa).

6 to 13 (GPTACGKT) lines the ATP pocket. 8–13 (TACGKT) is a binding site for substrate. Interaction with substrate tRNA regions lie at residues 31-34 (DSRQ) and 154-158 (QRAIR).

Belongs to the IPP transferase family. In terms of assembly, monomer. The cofactor is Mg(2+).

The enzyme catalyses adenosine(37) in tRNA + dimethylallyl diphosphate = N(6)-dimethylallyladenosine(37) in tRNA + diphosphate. In terms of biological role, catalyzes the transfer of a dimethylallyl group onto the adenine at position 37 in tRNAs that read codons beginning with uridine, leading to the formation of N6-(dimethylallyl)adenosine (i(6)A). This Porphyromonas gingivalis (strain ATCC BAA-308 / W83) protein is tRNA dimethylallyltransferase 2.